A 436-amino-acid polypeptide reads, in one-letter code: GTPase Der (436 aa).

EngA-type G domains lie at 4–167 (PVVA…PKRG) and 176–351 (IKFC…ENHA). GTP-binding positions include 10-17 (GRPNVGKS), 57-61 (DTGGI), 119-122 (NKID), 182-189 (GRPNVGKS), 229-233 (DTAGM), and 294-297 (NKWD). Residues 352 to 436 (MRVQTNVLNE…PIKIIARPRK (85 aa)) enclose the KH-like domain.

This sequence belongs to the TRAFAC class TrmE-Era-EngA-EngB-Septin-like GTPase superfamily. EngA (Der) GTPase family. In terms of assembly, associates with the 50S ribosomal subunit.

GTPase that plays an essential role in the late steps of ribosome biogenesis. The sequence is that of GTPase Der from Geobacillus sp. (strain WCH70).